The following is a 551-amino-acid chain: Cytochrome P450 monooxygenase FCK2 (551 aa).

Transmembrane regions (helical) follow at residues 8 to 28, 35 to 55, and 69 to 89; these read FDPA…VFIF, LHVF…VYIV, and VTTI…ISIL. An N-linked (GlcNAc...) asparagine glycan is attached at Asn258. Residue Cys493 participates in heme binding.

The protein belongs to the cytochrome P450 family. It depends on heme as a cofactor.

The protein localises to the membrane. The protein operates within secondary metabolite biosynthesis. Functionally, cytochrome P450 monooxygenase; part of the gene cluster that mediates the biosynthesis of cytokinins such as fusatin, fusatinic acids or 8-oxofusatin, known for their growth promoting and anti-senescence activities toward host plants. FCK1 is a bifunctional enzyme that performs the first steps in the biosynthesis of Fusarium cytokinins. It first condenses adenosine monophosphate (AMP) with dimethylallyl diphosphate (DMAPP) to yield isoprenyl adenosine monophosphate. It then catalyzes the removal of the phosphoribose to produce isopentenylaldehyde. The cytochrome P450 monooxygenase then converts isopentenylaldehyde to trans-zeatin. A condensation step converts trans-zeatin to fusatin which is further modified to produce fusatinic acid. The mechanism for oxidation of fusatin to fusatinic acid remains unknown. 8-oxofusatin could be produced through several pathways, via direct oxygenation of fusatin, or via the 8-oxo-pentenyladenine intermediate which itself must arise from either the prenylation of 8-oxo-AMP by FCK1 and/or oxygenation of isopentenylaldehyde. Both the FCK3 and FCK4 enzymes act downstream of the identified cytokinins to produce yet unidentified compounds. The sequence is that of Cytochrome P450 monooxygenase FCK2 from Fusarium pseudograminearum (strain CS3096) (Wheat and barley crown-rot fungus).